Reading from the N-terminus, the 369-residue chain is Caffeine synthase 1 (369 aa).

Y24 contacts S-adenosyl-L-homocysteine. T31 provides a ligand contact to caffeine. S-adenosyl-L-homocysteine is bound by residues C66, N71, D103, L104, S138, and F139. Caffeine-binding residues include Y156, H159, and W160. N177 serves as a coordination point for Mg(2+). R225 contacts caffeine. 3 residues coordinate Mg(2+): D263, F265, and N266. F321 serves as a coordination point for caffeine.

Belongs to the methyltransferase superfamily. Type-7 methyltransferase family. It depends on Mg(2+) as a cofactor.

It carries out the reaction theobromine + S-adenosyl-L-methionine = caffeine + S-adenosyl-L-homocysteine + H(+). The catalysed reaction is 7-methylxanthine + S-adenosyl-L-methionine = theobromine + S-adenosyl-L-homocysteine + H(+). Its pathway is alkaloid biosynthesis. Functionally, involved in the biosynthesis of caffeine. Catalyzes the conversion of 7-methylxanthine (7mX) to theobromine and of theobromine to caffeine. This chain is Caffeine synthase 1, found in Camellia crassicolumna (Evergreen tea).